A 681-amino-acid polypeptide reads, in one-letter code: Secretion system apparatus protein SsaV (681 aa).

Helical transmembrane passes span Met24–Trp44, Ile48–Ser68, Leu73–Ser93, Gly118–Ile138, Thr206–Val226, Ile244–Ile264, and Ala295–Phe315.

This sequence belongs to the FHIPEP (flagella/HR/invasion proteins export pore) family.

The protein localises to the cell inner membrane. Component of Salmonella pathogenicity island 2 (SPI-2) type III secretion system, required for secretion of some type III-secreted effectors including the SpvB exotoxin. This is Secretion system apparatus protein SsaV (ssaV) from Salmonella typhimurium (strain 14028s / SGSC 2262).